Reading from the N-terminus, the 413-residue chain is Phosphopentomutase (413 aa).

6 residues coordinate Mn(2+): Asp-11, Asp-306, His-311, Asp-347, His-348, and His-359.

This sequence belongs to the phosphopentomutase family. The cofactor is Mn(2+).

The protein localises to the cytoplasm. The enzyme catalyses 2-deoxy-alpha-D-ribose 1-phosphate = 2-deoxy-D-ribose 5-phosphate. The catalysed reaction is alpha-D-ribose 1-phosphate = D-ribose 5-phosphate. It functions in the pathway carbohydrate degradation; 2-deoxy-D-ribose 1-phosphate degradation; D-glyceraldehyde 3-phosphate and acetaldehyde from 2-deoxy-alpha-D-ribose 1-phosphate: step 1/2. Its function is as follows. Isomerase that catalyzes the conversion of deoxy-ribose 1-phosphate (dRib-1-P) and ribose 1-phosphate (Rib-1-P) to deoxy-ribose 5-phosphate (dRib-5-P) and ribose 5-phosphate (Rib-5-P), respectively. The polypeptide is Phosphopentomutase (Helicobacter pylori (strain HPAG1)).